We begin with the raw amino-acid sequence, 295 residues long: 4-hydroxy-tetrahydrodipicolinate synthase (295 aa).

Position 48 (Thr-48) interacts with pyruvate. Tyr-136 functions as the Proton donor/acceptor in the catalytic mechanism. Lys-164 functions as the Schiff-base intermediate with substrate in the catalytic mechanism. Ile-206 lines the pyruvate pocket.

The protein belongs to the DapA family. In terms of assembly, homotetramer; dimer of dimers.

The protein resides in the cytoplasm. It carries out the reaction L-aspartate 4-semialdehyde + pyruvate = (2S,4S)-4-hydroxy-2,3,4,5-tetrahydrodipicolinate + H2O + H(+). The protein operates within amino-acid biosynthesis; L-lysine biosynthesis via DAP pathway; (S)-tetrahydrodipicolinate from L-aspartate: step 3/4. In terms of biological role, catalyzes the condensation of (S)-aspartate-beta-semialdehyde [(S)-ASA] and pyruvate to 4-hydroxy-tetrahydrodipicolinate (HTPA). This Actinobacillus pleuropneumoniae serotype 7 (strain AP76) protein is 4-hydroxy-tetrahydrodipicolinate synthase.